A 778-amino-acid polypeptide reads, in one-letter code: E3 UFM1-protein ligase 1 homolog (778 aa).

Residues 404 to 477 (NNLSTSHDAD…TVQQSAGNTR (74 aa)) are disordered. Over residues 445–457 (KSTKKHQRGRAAA) the composition is skewed to basic residues.

The protein belongs to the UFL1 family.

E3 UFM1-protein ligase that mediates ufmylation of target proteins. The protein is E3 UFM1-protein ligase 1 homolog of Drosophila virilis (Fruit fly).